A 1060-amino-acid chain; its full sequence is Centrosomal protein of 131 kDa (1060 aa).

Residues 1–11 (MKGSRTITATP) are compositionally biased toward polar residues. The segment at 1 to 96 (MKGSRTITAT…TGSPRPAEPT (96 aa)) is disordered. Residues 1-244 (MKGSRTITAT…SQSARGTTGL (244 aa)) are interaction with PLK4. Phosphoserine is present on residues Ser-14 and Ser-35. Composition is skewed to polar residues over residues 32–50 (RPGS…SVAT) and 73–88 (LRRS…SWTG). The residue at position 47 (Ser-47) is a Phosphoserine; by MAPKAPK2. Residue Ser-78 is modified to Phosphoserine; by MAPKAPK2 and PLK4. Phosphoserine is present on residues Ser-89, Ser-105, Ser-114, Ser-146, and Ser-150. 2 disordered regions span residues 136-155 (LALP…LGPR) and 217-248 (EGGE…LRRR). The span at 217–226 (EGGEGSDLGK) shows a compositional bias: basic and acidic residues. The region spanning 263–283 (NQAAVTIQRWYRCQVQRRRAG) is the IQ domain. Basic and acidic residues-rich tracts occupy residues 314 to 327 (EEAA…EKAR) and 344 to 363 (KASE…RAPE). The segment at 314 to 437 (EEAARKKARE…VSGSSRGKAR (124 aa)) is disordered. Low complexity predominate over residues 398-408 (ASESSPEQWQS). The segment covering 409-424 (PEDKPQDIHSQGEARQ) has biased composition (basic and acidic residues). Thr-473 is modified (phosphothreonine). A Phosphoserine modification is found at Ser-481.

It belongs to the CEP131 family. As to quaternary structure, self-associates. Associates with the centriolar satellite BBSome protein complex Interacts with BBS4; the interaction limits BBS4 availability for association with the BBSome complex, and hence negatively regulates ciliary localization of the BBSome complex. Interacts with MIB1. Interacts with PCM1; the interaction increases in response to ultraviolet light (UV) radiation. Associates with microtubule; association to microtubule is reduced in response to cellular stress, such as UV stimulation, in a process that requires p38 MAP kinase signaling. Interacts with CEP290, DCTN1, MAP1LC3B, PCNT, PCM1 and CEP152. Interacts with 14-3-3 proteins following UV-induced phosphorylation by MAPKAPK2; this inhibits formation of novel centriolar satellites. Interacts with SDCCAG8. Interacts with CCDC61. Interacts with PLK4. Post-translationally, ubiquitinated. Undergoes monoubiquitination catalyzed by the E3 ubiquitin-protein ligase MIB1 in proliferating cells, preventing cilia formation. Monoubiquitination by MIB1 is inhibited in response to cellular stress, such as ultraviolet light (UV) radiation or heat shock, resulting in ciliogenesis restoration. In terms of processing, MAPKAPK2-dependent phosphorylation at Ser-47 and Ser-78 occurs in response to cellular stress such as exposure to ultraviolet irradiation and promotes binding to 14-3-3 proteins which leads to cytoplasmic sequestration of CEP131 and blocks formation of new centriolar satellites. Phosphorylation at Ser-78 mediated by PLK4 is essential for proper organization and integrity of centriolar satellites but is dispensable for its localization to centrioles and its function in ciliogenesis. In terms of tissue distribution, localized to the pre-acrosome region of round and elongated spermatids in testis but also present in ovary, brain and adipose tissue.

It is found in the cytoplasm. It localises to the cytoskeleton. The protein resides in the microtubule organizing center. Its subcellular location is the centrosome. The protein localises to the centriolar satellite. It is found in the centriole. It localises to the cilium basal body. The protein resides in the cytoplasmic vesicle. Its subcellular location is the secretory vesicle. The protein localises to the acrosome. Its function is as follows. Component of centriolar satellites contributing to the building of a complex and dynamic network required to regulate cilia/flagellum formation. In proliferating cells, MIB1-mediated ubiquitination induces its sequestration within centriolar satellites, precluding untimely cilia formation initiation. In contrast, during normal and ultraviolet or heat shock cellular stress-induced ciliogenesis, its non-ubiquitinated form is rapidly displaced from centriolar satellites and recruited to centrosome/basal bodies in a microtubule- and p38 MAPK-dependent manner. Also acts as a negative regulator of BBSome ciliary trafficking. Plays a role in sperm flagellar formation; may be involved in the regulation of intraflagellar transport (IFT) and/or intramanchette (IMT) trafficking, which are important for axoneme extension and/or cargo delivery to the nascent sperm tail. Required for optimal cell proliferation and cell cycle progression; may play a role in the regulation of genome stability and centriole duplication in non-ciliogenic cells. Involved in centriole duplication. Required for CEP152, WDR62 and CEP63 centrosomal localization and promotes the centrosomal localization of CDK2. Essential for maintaining proper centriolar satellite integrity. The polypeptide is Centrosomal protein of 131 kDa (Cep131) (Mus musculus (Mouse)).